We begin with the raw amino-acid sequence, 265 residues long: uncharacterized protein (265 aa).

This sequence belongs to the MG067/MG068/MG395 family.

This is an uncharacterized protein from Mycoplasma pneumoniae (strain ATCC 29342 / M129 / Subtype 1) (Mycoplasmoides pneumoniae).